The primary structure comprises 404 residues: Cysteine desulfurase IscS (404 aa).

Pyridoxal 5'-phosphate contacts are provided by residues 75–76 (AT), asparagine 155, glutamine 183, and 203–205 (SAH). Lysine 206 carries the N6-(pyridoxal phosphate)lysine modification. Threonine 243 contacts pyridoxal 5'-phosphate. The active-site Cysteine persulfide intermediate is cysteine 328. Residue cysteine 328 participates in [2Fe-2S] cluster binding.

This sequence belongs to the class-V pyridoxal-phosphate-dependent aminotransferase family. NifS/IscS subfamily. Homodimer. Forms a heterotetramer with IscU, interacts with other sulfur acceptors. Pyridoxal 5'-phosphate serves as cofactor.

The protein resides in the cytoplasm. The catalysed reaction is (sulfur carrier)-H + L-cysteine = (sulfur carrier)-SH + L-alanine. The protein operates within cofactor biosynthesis; iron-sulfur cluster biosynthesis. Its function is as follows. Master enzyme that delivers sulfur to a number of partners involved in Fe-S cluster assembly, tRNA modification or cofactor biosynthesis. Catalyzes the removal of elemental sulfur atoms from cysteine to produce alanine. Functions as a sulfur delivery protein for Fe-S cluster synthesis onto IscU, an Fe-S scaffold assembly protein, as well as other S acceptor proteins. The protein is Cysteine desulfurase IscS of Vibrio campbellii (strain ATCC BAA-1116).